A 491-amino-acid polypeptide reads, in one-letter code: Trigger factor (491 aa).

A PPIase FKBP-type domain is found at 173–260 (GDVAVVSFSG…LDELKGRELP (88 aa)). Positions 435–491 (MVDPASEDKPAKASKAKSSKAKAEKEPAAEGQAKAKPAAKTSKSKTKAAEKLITPID) are disordered. The span at 463-475 (AEGQAKAKPAAKT) shows a compositional bias: low complexity.

Belongs to the FKBP-type PPIase family. Tig subfamily.

It is found in the cytoplasm. The catalysed reaction is [protein]-peptidylproline (omega=180) = [protein]-peptidylproline (omega=0). Its function is as follows. Involved in protein export. Acts as a chaperone by maintaining the newly synthesized protein in an open conformation. Functions as a peptidyl-prolyl cis-trans isomerase. The chain is Trigger factor from Synechococcus sp. (strain RCC307).